The sequence spans 257 residues: Type III pantothenate kinase (257 aa).

6–13 contacts ATP; it reads DVGNTNTV. Substrate contacts are provided by residues Tyr102 and 109 to 112; that span reads GADR. The active-site Proton acceptor is Asp111. Residue Asp131 participates in K(+) binding. Thr134 lines the ATP pocket. Thr186 contacts substrate.

This sequence belongs to the type III pantothenate kinase family. Homodimer. It depends on NH4(+) as a cofactor. K(+) serves as cofactor.

Its subcellular location is the cytoplasm. It catalyses the reaction (R)-pantothenate + ATP = (R)-4'-phosphopantothenate + ADP + H(+). It participates in cofactor biosynthesis; coenzyme A biosynthesis; CoA from (R)-pantothenate: step 1/5. Catalyzes the phosphorylation of pantothenate (Pan), the first step in CoA biosynthesis. This Leptospira interrogans serogroup Icterohaemorrhagiae serovar copenhageni (strain Fiocruz L1-130) protein is Type III pantothenate kinase.